The chain runs to 325 residues: Hydroxymethylglutaryl-CoA lyase, mitochondrial (325 aa).

Residues 1–27 (MAAMRKALPRRLVGLASLRAVSTSSMG) constitute a mitochondrion transit peptide. The region spanning 33–300 (VKIVEVGPRD…HTGVNLQKLL (268 aa)) is the Pyruvate carboxyltransferase domain. Residue R41 participates in substrate binding. D42 contacts a divalent metal cation. K48 bears the N6-acetyllysine; alternate mark. The residue at position 48 (K48) is an N6-succinyllysine; alternate. K111 is modified (N6-acetyllysine). K137 and K179 each carry N6-acetyllysine; alternate. Residues K137 and K179 each carry the N6-succinyllysine; alternate modification. A divalent metal cation is bound by residues H233 and H235. Residue C266 is part of the active site. An a divalent metal cation-binding site is contributed by N275. The short motif at 323-325 (CKL) is the Microbody targeting signal element. K324 carries the N6-acetyllysine modification.

This sequence belongs to the HMG-CoA lyase family. In terms of assembly, homodimer; disulfide-linked. Can also form homotetramers. A divalent metal cation is required as a cofactor. As to expression, highest expression in liver. Expressed in pancreas, kidney, intestine, testis, fibroblasts and lymphoblasts. Very low expression in brain and skeletal muscle. The relative expression of isoform 2 (at mRNA level) is highest in heart (30%), skeletal muscle (22%), and brain (14%).

Its subcellular location is the mitochondrion matrix. It localises to the peroxisome. The catalysed reaction is (3S)-3-hydroxy-3-methylglutaryl-CoA = acetoacetate + acetyl-CoA. It functions in the pathway metabolic intermediate metabolism; (S)-3-hydroxy-3-methylglutaryl-CoA degradation; acetoacetate from (S)-3-hydroxy-3-methylglutaryl-CoA: step 1/1. Its activity is regulated as follows. Stimulated by reducing agents such as dithiothreitol (DTT). In terms of biological role, mitochondrial 3-hydroxy-3-methylglutaryl-CoA lyase that catalyzes a cation-dependent cleavage of (S)-3-hydroxy-3-methylglutaryl-CoA into acetyl-CoA and acetoacetate, a key step in ketogenesis. Terminal step in leucine catabolism. Ketone bodies (beta-hydroxybutyrate, acetoacetate and acetone) are essential as an alternative source of energy to glucose, as lipid precursors and as regulators of metabolism. This Homo sapiens (Human) protein is Hydroxymethylglutaryl-CoA lyase, mitochondrial (HMGCL).